Reading from the N-terminus, the 553-residue chain is Phospholipase B (553 aa).

The first 35 residues, 1–35 (MIRFGNPSSSDKRRQRCRSWYWGGLLLLWAVAETR), serve as a signal peptide directing secretion. N-linked (GlcNAc...) asparagine glycans are attached at residues N313, N416, and N531.

Belongs to the phospholipase B-like family. As to expression, expressed by the venom gland.

It localises to the secreted. Its function is as follows. May cause hemolysis or may be involved in protein folding and translation. This is Phospholipase B from Crotalus adamanteus (Eastern diamondback rattlesnake).